The chain runs to 563 residues: Pre-hexon-linking protein IIIa (563 aa).

Residues 1–117 (MRKRRTLTAP…ALLHRVSKYN (117 aa)) are peripentonal hexon-tethering domain. A binding to hexon-linking protein region spans residues 148–261 (GSLTALNSFL…FTDSVSISRD (114 aa)). A Phosphoserine; by host modification is found at S235. T284 bears the Phosphothreonine; by host mark. Positions 449–471 (RTESRSVSRVPTPASSRRSSVAM) are disordered. Phosphoserine; by host is present on residues S452 and S456. Low complexity predominate over residues 462-471 (ASSRRSSVAM). Phosphoserine; by host occurs at positions 475 and 486. The segment at 524–543 (SSAISSDESDDGMSKPDKFL) is disordered. Positions 549–563 (GNPFAHLRPKLGRCL) are excised as a propeptide.

This sequence belongs to the adenoviridae hexon-linking protein IIIa family. As to quaternary structure, interacts with hexon proteins; this interaction tethers the peripentonal hexons to hexons situated in the facet. Interacts with the penton protein (via N-terminus). Interacts with packaging protein 3; this interaction is required to promote correct genome packaging. Post-translationally, cleaved near the C-terminus by the viral protease during virion maturation to form the mature protein.

The protein resides in the virion. It localises to the host nucleus. Its function is as follows. Structural component of the virion that acts as a cement protein on the capsid exterior which mediates the interactions between the hexons, including the peripentonal hexons, and reaches all the way to the penton vertices. Two hexon linking proteins IIIa, one from each facet, stabilize the unique edge interface between a pair of facets. As the virus enters the host cell, hexon linking proteins IIIa are shed concomitant with virion acidification in the endosome. During virus assembly, seems to play a role in the serotype specificity of the packaging of viral DNA via its interaction with packaging protein 3. In Canis lupus familiaris (Dog), this protein is Pre-hexon-linking protein IIIa.